The primary structure comprises 279 residues: Large ribosomal subunit protein uL2 (279 aa).

Disordered stretches follow at residues 32–53 and 225–279; these read SLLRPLPKHGGRNNAGRITTRH and AMNP…KKRK. Basic and acidic residues predominate over residues 253–268; it reads KEGRTRHINKPSDKLI. A compositionally biased stretch (basic residues) spans 269-279; sequence VRRRNAGKKRK.

Belongs to the universal ribosomal protein uL2 family. As to quaternary structure, part of the 50S ribosomal subunit. Forms a bridge to the 30S subunit in the 70S ribosome.

Functionally, one of the primary rRNA binding proteins. Required for association of the 30S and 50S subunits to form the 70S ribosome, for tRNA binding and peptide bond formation. It has been suggested to have peptidyltransferase activity; this is somewhat controversial. Makes several contacts with the 16S rRNA in the 70S ribosome. This is Large ribosomal subunit protein uL2 from Clavibacter michiganensis subsp. michiganensis (strain NCPPB 382).